A 1251-amino-acid chain; its full sequence is Phospholipid-transporting ATPase IC (1251 aa).

Residues Met-1–Asn-54 form a disordered region. Residues Met-1–Ile-108 are Cytoplasmic-facing. The span at Ser-25–Asp-35 shows a compositional bias: acidic residues. The segment covering Glu-43–Asn-54 has biased composition (basic and acidic residues). A helical transmembrane segment spans residues Pro-109–Leu-130. The Exoplasmic loop segment spans residues Gln-131–Ile-136. A helical membrane pass occupies residues Ser-137–Ala-156. At Ile-157–Met-340 the chain is on the cytoplasmic side. The helical transmembrane segment at Val-341–Trp-362 threads the bilayer. Topologically, residues Glu-363–Phe-389 are exoplasmic loop. The chain crosses the membrane as a helical span at residues Trp-390 to Ile-411. Over Arg-412–Lys-949 the chain is Cytoplasmic. Asp-454 acts as the 4-aspartylphosphate intermediate in catalysis. Residues Asp-454, Lys-455, Thr-456, Glu-555, Phe-596, Lys-619, Arg-652, Thr-732, Gly-733, Asp-734, Arg-867, and Lys-873 each coordinate ATP. Mg(2+) is bound at residue Asp-454. Residue Thr-456 coordinates Mg(2+). Position 893 (Asp-893) interacts with Mg(2+). Residues Asn-896 and Asp-897 each contribute to the ATP site. Position 897 (Asp-897) interacts with Mg(2+). A helical membrane pass occupies residues Phe-950–Phe-970. Residues Phe-971–Asp-982 are Exoplasmic loop-facing. Residues Trp-983–Leu-1002 traverse the membrane as a helical segment. The Cytoplasmic portion of the chain corresponds to Leu-1003 to Arg-1032. The chain crosses the membrane as a helical span at residues Phe-1033–Ala-1054. Residues Tyr-1055–Asp-1068 lie on the Exoplasmic loop side of the membrane. The chain crosses the membrane as a helical span at residues Tyr-1069–Asp-1091. At Thr-1092–Phe-1097 the chain is on the cytoplasmic side. The helical transmembrane segment at Val-1098–His-1118 threads the bilayer. At Ser-1119 to Asn-1138 the chain is on the exoplasmic loop side. Residues Ala-1139 to Ile-1163 traverse the membrane as a helical segment. At Arg-1164–Ser-1251 the chain is on the cytoplasmic side. Ser-1223 bears the Phosphoserine mark.

It belongs to the cation transport ATPase (P-type) (TC 3.A.3) family. Type IV subfamily. As to quaternary structure, component of a P4-ATPase flippase complex which consists of a catalytic alpha subunit ATP8B1 and an accessory beta subunit TMEM30A. The flippase ATP8B1:TMEM30A complex can form an intermediate phosphoenzyme in vitro. Also interacts with beta subunit TMEM30B. Mg(2+) is required as a cofactor. In terms of tissue distribution, found in most tissues except brain and skeletal muscle. Most abundant in pancreas and small intestine.

It localises to the cell membrane. It is found in the apical cell membrane. The protein localises to the cell projection. Its subcellular location is the stereocilium. The protein resides in the endoplasmic reticulum. It localises to the golgi apparatus. It catalyses the reaction ATP + H2O + phospholipidSide 1 = ADP + phosphate + phospholipidSide 2.. It carries out the reaction a 1,2-diacyl-sn-glycero-3-phosphocholine(out) + ATP + H2O = a 1,2-diacyl-sn-glycero-3-phosphocholine(in) + ADP + phosphate + H(+). The catalysed reaction is a 1,2-diacyl-sn-glycero-3-phospho-L-serine(out) + ATP + H2O = a 1,2-diacyl-sn-glycero-3-phospho-L-serine(in) + ADP + phosphate + H(+). Catalytic component of a P4-ATPase flippase complex which catalyzes the hydrolysis of ATP coupled to the transport of phospholipids, in particular phosphatidylcholines (PC), from the outer to the inner leaflet of the plasma membrane. May participate in the establishment of the canalicular membrane integrity by ensuring asymmetric distribution of phospholipids in the canicular membrane. Thus may have a role in the regulation of bile acids transport into the canaliculus, uptake of bile acids from intestinal contents into intestinal mucosa or both and protect hepatocytes from bile salts. Involved in the microvillus formation in polarized epithelial cells; the function seems to be independent from its flippase activity. Participates in correct apical membrane localization of CDC42, CFTR and SLC10A2. Enables CDC42 clustering at the apical membrane during enterocyte polarization through the interaction between CDC42 polybasic region and negatively charged membrane lipids provided by ATP8B1. Together with TMEM30A is involved in uptake of the synthetic drug alkylphospholipid perifosine. Required for the preservation of cochlear hair cells in the inner ear. May act as cardiolipin transporter during inflammatory injury. In Homo sapiens (Human), this protein is Phospholipid-transporting ATPase IC.